The primary structure comprises 501 residues: uncharacterized protein (501 aa).

A helical transmembrane segment spans residues 26-46 (ILLLLLGLIVLVNIGINVATM). Disordered stretches follow at residues 316–384 (RGTE…VRRR) and 409–501 (EASH…EKLN). The segment covering 476 to 490 (RSSSLPPASTSTLRP) has biased composition (low complexity).

It localises to the membrane. This is an uncharacterized protein from Homo sapiens (Human).